The following is a 232-amino-acid chain: tRNA1(Val) (adenine(37)-N6)-methyltransferase (232 aa).

It belongs to the methyltransferase superfamily. tRNA (adenine-N(6)-)-methyltransferase family.

The protein localises to the cytoplasm. It catalyses the reaction adenosine(37) in tRNA1(Val) + S-adenosyl-L-methionine = N(6)-methyladenosine(37) in tRNA1(Val) + S-adenosyl-L-homocysteine + H(+). In terms of biological role, specifically methylates the adenine in position 37 of tRNA(1)(Val) (anticodon cmo5UAC). In Haemophilus influenzae (strain ATCC 51907 / DSM 11121 / KW20 / Rd), this protein is tRNA1(Val) (adenine(37)-N6)-methyltransferase.